Consider the following 498-residue polypeptide: Alpha-amylase A (498 aa).

The signal sequence occupies residues 1-21 (MMVAWWSLFLYGLQVAAPALA). The cysteines at positions 51 and 59 are disulfide-linked. Residues Gln-56 and Trp-104 each contribute to the substrate site. Asn-142 lines the Ca(2+) pocket. Substrate is bound at residue His-143. Cysteines 171 and 185 form a disulfide. Ca(2+)-binding residues include Glu-183 and Asp-196. An N-linked (GlcNAc...) asparagine glycan is attached at Asn-218. Position 225 (Arg-225) interacts with substrate. The Ca(2+) site is built by Asp-227, His-231, and Glu-251. Asp-227 acts as the Nucleophile in catalysis. Residue 230 to 231 (KH) coordinates substrate. Glu-251 (proton donor) is an active-site residue. Gly-255 is a substrate binding site. An intrachain disulfide couples Cys-261 to Cys-304. 2 residues coordinate substrate: Asp-318 and Arg-365. Cys-461 and Cys-496 are oxidised to a cystine.

The protein belongs to the glycosyl hydrolase 13 family. Requires Ca(2+) as cofactor.

The catalysed reaction is Endohydrolysis of (1-&gt;4)-alpha-D-glucosidic linkages in polysaccharides containing three or more (1-&gt;4)-alpha-linked D-glucose units.. In Aspergillus awamori (Black koji mold), this protein is Alpha-amylase A (amyA).